Reading from the N-terminus, the 345-residue chain is Tetraacyldisaccharide 4'-kinase (345 aa).

61 to 68 (TAGGTGKT) serves as a coordination point for ATP.

Belongs to the LpxK family.

It catalyses the reaction a lipid A disaccharide + ATP = a lipid IVA + ADP + H(+). It functions in the pathway glycolipid biosynthesis; lipid IV(A) biosynthesis; lipid IV(A) from (3R)-3-hydroxytetradecanoyl-[acyl-carrier-protein] and UDP-N-acetyl-alpha-D-glucosamine: step 6/6. Transfers the gamma-phosphate of ATP to the 4'-position of a tetraacyldisaccharide 1-phosphate intermediate (termed DS-1-P) to form tetraacyldisaccharide 1,4'-bis-phosphate (lipid IVA). In Xanthomonas axonopodis pv. citri (strain 306), this protein is Tetraacyldisaccharide 4'-kinase.